We begin with the raw amino-acid sequence, 199 residues long: Small ribosomal subunit protein uS2 (199 aa).

This sequence belongs to the universal ribosomal protein uS2 family.

The chain is Small ribosomal subunit protein uS2 (rps2) from Thermoplasma acidophilum (strain ATCC 25905 / DSM 1728 / JCM 9062 / NBRC 15155 / AMRC-C165).